Consider the following 640-residue polypeptide: ESX-3 secretion system protein EccA3 (640 aa).

393 to 400 (GPPGTGKT) lines the ATP pocket.

The protein belongs to the CbxX/CfxQ family. Part of the ESX-3 / type VII secretion system (T7SS), which is composed of cytosolic and membrane components.

The protein resides in the cytoplasm. Its function is as follows. Part of an ESX-3 / type VII specialized secretion system (T7SS), which exports several proteins. EccA3 exhibits ATPase activity and may provide energy for the export of ESX-3 substrates. In Mycobacterium leprae (strain TN), this protein is ESX-3 secretion system protein EccA3.